Here is a 238-residue protein sequence, read N- to C-terminus: Pyridoxine 5'-phosphate synthase (238 aa).

Asn-7 contacts 3-amino-2-oxopropyl phosphate. 9–10 is a binding site for 1-deoxy-D-xylulose 5-phosphate; that stretch reads DH. A 3-amino-2-oxopropyl phosphate-binding site is contributed by Arg-18. Catalysis depends on His-43, which acts as the Proton acceptor. Residues Arg-45 and His-50 each contribute to the 1-deoxy-D-xylulose 5-phosphate site. Glu-70 serves as the catalytic Proton acceptor. Position 100 (Thr-100) interacts with 1-deoxy-D-xylulose 5-phosphate. Catalysis depends on His-190, which acts as the Proton donor. Residues Gly-191 and 212 to 213 each bind 3-amino-2-oxopropyl phosphate; that span reads GH.

Belongs to the PNP synthase family. In terms of assembly, homooctamer; tetramer of dimers.

The protein resides in the cytoplasm. The catalysed reaction is 3-amino-2-oxopropyl phosphate + 1-deoxy-D-xylulose 5-phosphate = pyridoxine 5'-phosphate + phosphate + 2 H2O + H(+). It participates in cofactor biosynthesis; pyridoxine 5'-phosphate biosynthesis; pyridoxine 5'-phosphate from D-erythrose 4-phosphate: step 5/5. In terms of biological role, catalyzes the complicated ring closure reaction between the two acyclic compounds 1-deoxy-D-xylulose-5-phosphate (DXP) and 3-amino-2-oxopropyl phosphate (1-amino-acetone-3-phosphate or AAP) to form pyridoxine 5'-phosphate (PNP) and inorganic phosphate. This is Pyridoxine 5'-phosphate synthase from Prochlorococcus marinus (strain MIT 9312).